The primary structure comprises 138 residues: Large ribosomal subunit protein uL16 (138 aa).

Residues 1–15 (MLSPKKVKYRKKQRG) are compositionally biased toward basic residues. The interval 1–20 (MLSPKKVKYRKKQRGRLSGE) is disordered.

It belongs to the universal ribosomal protein uL16 family. As to quaternary structure, part of the 50S ribosomal subunit.

Functionally, binds 23S rRNA and is also seen to make contacts with the A and possibly P site tRNAs. The sequence is that of Large ribosomal subunit protein uL16 from Borrelia hermsii (strain HS1 / DAH).